A 122-amino-acid polypeptide reads, in one-letter code: Putative protein adenylyltransferase MJ1547 (122 aa).

The GSX(10)DXD motif motif lies at Gly11 to Asp25. 3 residues coordinate Mg(2+): Asp23, Asp25, and Asp48.

Belongs to the MntA antitoxin family. As to quaternary structure, probably forms a complex with cognate toxin MJ1548. The cofactor is Mg(2+).

It carries out the reaction L-tyrosyl-[protein] + ATP = O-(5'-adenylyl)-L-tyrosyl-[protein] + diphosphate. The catalysed reaction is O-(5'-adenylyl)-L-tyrosyl-[protein] + ATP = O-[5'-(adenylyl-(5'-&gt;3')-adenylyl)]-L-tyrosyl-[protein] + diphosphate. In terms of biological role, probable antitoxin component of a putative type VII toxin-antitoxin (TA) system. Neutralizes cognate toxic MJ1548 by di-AMPylation. The protein is Putative protein adenylyltransferase MJ1547 of Methanocaldococcus jannaschii (strain ATCC 43067 / DSM 2661 / JAL-1 / JCM 10045 / NBRC 100440) (Methanococcus jannaschii).